Consider the following 65-residue polypeptide: Large ribosomal subunit protein bL32 (65 aa).

Positions 1 to 19 (MAVQKSRKTPSKRGMRRSH) are enriched in basic residues. The disordered stretch occupies residues 1–32 (MAVQKSRKTPSKRGMRRSHNALTNPTLSEDQE).

It belongs to the bacterial ribosomal protein bL32 family.

In Ruthia magnifica subsp. Calyptogena magnifica, this protein is Large ribosomal subunit protein bL32.